Reading from the N-terminus, the 332-residue chain is MNAPKTVTVKTALIVAGPTCSGKSALALDLARCFEGTVINADSMQVYRDLHILTARPHAADEAAVPHRLYGVLDAAVPGSVAWWRSEALREMDVAWAEERMPILCGGTGMYLRALTDGLVEVPDPGDAARSEARGLAEEIGPEALHARLMQVDPETASGLRPNDTQRISRAWEVWTGTGHGLAWWRSQPGLPPASCRFVSVQLDPEREGLRRAIDSRFGQMLEAGALEEVSALLERGLDPVLPAMRAHGVPELAAVLRGEVPLEEARKSAVLAIGRYTRRQATWFRHHALGKGDDGMISLRRYTHSAQESESQYEKIENFISERVDAAARAS.

Gly-17–Ser-24 lines the ATP pocket. Position 19–24 (Thr-19–Ser-24) interacts with substrate. Interaction with substrate tRNA stretches follow at residues Asp-42 to Gln-45 and Gln-166 to Arg-170.

Belongs to the IPP transferase family. As to quaternary structure, monomer. The cofactor is Mg(2+).

It catalyses the reaction adenosine(37) in tRNA + dimethylallyl diphosphate = N(6)-dimethylallyladenosine(37) in tRNA + diphosphate. Its function is as follows. Catalyzes the transfer of a dimethylallyl group onto the adenine at position 37 in tRNAs that read codons beginning with uridine, leading to the formation of N6-(dimethylallyl)adenosine (i(6)A). This is tRNA dimethylallyltransferase from Gluconobacter oxydans (strain 621H) (Gluconobacter suboxydans).